The primary structure comprises 406 residues: Zinc finger protein CONSTANS-LIKE 6 (406 aa).

Residues Cys17, Cys20, Cys40, and His45 each coordinate Zn(2+). The B box-type; atypical zinc finger occupies 17-59 (CDSCVKRRARWYCAADDAFLCHACDGSVHSANPLARRHERVRL). Residues 63-95 (SAGKYRHASPPHQATWHQGFTRKARTPRGGKKS) are disordered. Over residues 82–95 (FTRKARTPRGGKKS) the composition is skewed to basic residues. A CCT domain is found at 357-399 (REARVSRYREKRRTRLFSKKIRYEVRKLNAEKRPRMKGRFVKR).

Belongs to the CONSTANS family.

It localises to the nucleus. The polypeptide is Zinc finger protein CONSTANS-LIKE 6 (COL6) (Arabidopsis thaliana (Mouse-ear cress)).